A 79-amino-acid polypeptide reads, in one-letter code: uncharacterized protein (79 aa).

This is an uncharacterized protein from Ovis aries (Sheep).